Here is a 423-residue protein sequence, read N- to C-terminus: Gamma-glutamyl phosphate reductase (423 aa).

The protein belongs to the gamma-glutamyl phosphate reductase family.

The protein resides in the cytoplasm. It catalyses the reaction L-glutamate 5-semialdehyde + phosphate + NADP(+) = L-glutamyl 5-phosphate + NADPH + H(+). It functions in the pathway amino-acid biosynthesis; L-proline biosynthesis; L-glutamate 5-semialdehyde from L-glutamate: step 2/2. Functionally, catalyzes the NADPH-dependent reduction of L-glutamate 5-phosphate into L-glutamate 5-semialdehyde and phosphate. The product spontaneously undergoes cyclization to form 1-pyrroline-5-carboxylate. The chain is Gamma-glutamyl phosphate reductase from Burkholderia pseudomallei (strain 1710b).